We begin with the raw amino-acid sequence, 691 residues long: DNA ligase (691 aa).

NAD(+)-binding positions include 41–45 (DAEYD), 90–91 (SL), and Glu-130. The active-site N6-AMP-lysine intermediate is the Lys-132. Positions 153, 190, 307, and 331 each coordinate NAD(+). Zn(2+) is bound by residues Cys-425, Cys-428, Cys-443, and Cys-449. The 82-residue stretch at 610-691 (APQGVLAGKT…LHQLLEGNTP (82 aa)) folds into the BRCT domain.

Belongs to the NAD-dependent DNA ligase family. LigA subfamily. Mg(2+) serves as cofactor. Requires Mn(2+) as cofactor.

The catalysed reaction is NAD(+) + (deoxyribonucleotide)n-3'-hydroxyl + 5'-phospho-(deoxyribonucleotide)m = (deoxyribonucleotide)n+m + AMP + beta-nicotinamide D-nucleotide.. In terms of biological role, DNA ligase that catalyzes the formation of phosphodiester linkages between 5'-phosphoryl and 3'-hydroxyl groups in double-stranded DNA using NAD as a coenzyme and as the energy source for the reaction. It is essential for DNA replication and repair of damaged DNA. In Burkholderia lata (strain ATCC 17760 / DSM 23089 / LMG 22485 / NCIMB 9086 / R18194 / 383), this protein is DNA ligase.